The chain runs to 218 residues: DNA endonuclease I-ChuI (218 aa).

Belongs to the LAGLIDADG endonuclease family.

The protein resides in the plastid. The protein localises to the chloroplast. Functionally, probable endonuclease involved in intron homing. Encoded in the group-I intron of the subunit rRNA-encoding gene (rrnL), it generates a staggered cut with 4-nt (CTCG) 3'-OH overhangs 2 bp downstream from the intron insertion site. The polypeptide is DNA endonuclease I-ChuI (Chlamydomonas applanata (Chlamydomonas humicola)).